The primary structure comprises 230 residues: Large ribosomal subunit protein uL1 (230 aa).

It belongs to the universal ribosomal protein uL1 family. Part of the 50S ribosomal subunit.

Binds directly to 23S rRNA. The L1 stalk is quite mobile in the ribosome, and is involved in E site tRNA release. Its function is as follows. Protein L1 is also a translational repressor protein, it controls the translation of the L11 operon by binding to its mRNA. The polypeptide is Large ribosomal subunit protein uL1 (Leptospira borgpetersenii serovar Hardjo-bovis (strain JB197)).